We begin with the raw amino-acid sequence, 369 residues long: MNRQDIGFVQSSINYQFKNLQLLEQAFTRKSYSEEHPELQNNEVLEFYGDEILDFFVTKMMYKRFSRILNNELVSEKNEGELTKLKSILVSKESLARCMYNIGFSKFLYLGKSDEKNEVYKSKSVNEDLFEAIIGAVAADCDWNYEKLEKVCRTMLDMETTNGYLALLVKEKSHRLGFGEPCYRPFAWQTDNPEDWQSDNLFNMGIGFGGFGSTSKNPKTGKHEYGIQVGENKFTGIGDGIAQAKLNAEQKAYHFLIQEEIKQQFQNLDYTNPASTLHELFQKKVIMEVRYEFNEYHDENGNPIWNCKAILEGYGTFEADNASKKQVKQDASLKLLKFIAKTKIEQTEKWEIPTFYHGMARIWHDEGKI.

The RNase III domain occupies I6–D142. Residue E46 coordinates Mg(2+). Residue D50 is part of the active site. Residues D128 and E131 each contribute to the Mg(2+) site. The active site involves E131. The DRBM domain maps to N272–K341.

It belongs to the ribonuclease III family. As to quaternary structure, homodimer. Mg(2+) is required as a cofactor.

The protein localises to the cytoplasm. It catalyses the reaction Endonucleolytic cleavage to 5'-phosphomonoester.. Digests double-stranded RNA. Involved in the processing of primary rRNA transcript to yield the immediate precursors to the large and small rRNAs (23S and 16S). Processes some mRNAs, and tRNAs when they are encoded in the rRNA operon. Processes pre-crRNA and tracrRNA of type II CRISPR loci if present in the organism. The protein is Ribonuclease 3 (rnc) of Treponema succinifaciens (strain ATCC 33096 / DSM 2489 / 6091).